The primary structure comprises 509 residues: 2,3-bisphosphoglycerate-independent phosphoglycerate mutase (509 aa).

Asp11 lines the Mn(2+) pocket. Phosphotyrosine is present on Tyr35. Mn(2+) is bound at residue Ser61. Residue Ser61 is the Phosphoserine intermediate of the active site. Substrate contacts are provided by residues His122, 152–153 (RD), Arg184, Arg190, 260–263 (RPDR), and Lys335. Mn(2+)-binding residues include Asp402, His406, Asp443, His444, and His461.

This sequence belongs to the BPG-independent phosphoglycerate mutase family. Monomer. It depends on Mn(2+) as a cofactor.

It catalyses the reaction (2R)-2-phosphoglycerate = (2R)-3-phosphoglycerate. Its pathway is carbohydrate degradation; glycolysis; pyruvate from D-glyceraldehyde 3-phosphate: step 3/5. In terms of biological role, essential for rapid growth and for sporulation. Catalyzes the interconversion of 2-phosphoglycerate and 3-phosphoglycerate. This chain is 2,3-bisphosphoglycerate-independent phosphoglycerate mutase, found in Bacillus thuringiensis (strain Al Hakam).